The sequence spans 145 residues: Cytochrome b (145 aa).

The helical transmembrane segment at 38 to 58 threads the bilayer; the sequence is FFALHFLLPFVLAALVIMHLI. Heme b is bound by residues His42 and His56. An a ubiquinone-binding site is contributed by His61. A helical membrane pass occupies residues 85–105; the sequence is FVFKDLVTVFIFFIVLSVFVF.

It belongs to the cytochrome b family. In terms of assembly, fungal cytochrome b-c1 complex contains 10 subunits; 3 respiratory subunits, 2 core proteins and 5 low-molecular weight proteins. Cytochrome b-c1 complex is a homodimer. Requires heme b as cofactor.

Its subcellular location is the mitochondrion inner membrane. Its function is as follows. Component of the ubiquinol-cytochrome c reductase complex (complex III or cytochrome b-c1 complex) that is part of the mitochondrial respiratory chain. The b-c1 complex mediates electron transfer from ubiquinol to cytochrome c. Contributes to the generation of a proton gradient across the mitochondrial membrane that is then used for ATP synthesis. This is Cytochrome b (cob) from Aspergillus fumigatus (Neosartorya fumigata).